Reading from the N-terminus, the 180-residue chain is Methionine-R-sulfoxide reductase B2, mitochondrial (180 aa).

A mitochondrion-targeting transit peptide spans 1 to 41 (MSRFLVRLSTVVSKGATGKSVLPQKRIFAGIRLISSSTGLQ). Residues 49 to 178 (STDWQRKLSP…NSVALNFKPR (130 aa)) form the MsrB domain. Residues Cys-88, Cys-91, Cys-144, and Cys-147 each coordinate Zn(2+). Cys-167 acts as the Nucleophile in catalysis.

The protein belongs to the MsrB Met sulfoxide reductase family. Requires Zn(2+) as cofactor.

It is found in the mitochondrion. It catalyses the reaction L-methionyl-[protein] + [thioredoxin]-disulfide + H2O = L-methionyl-(R)-S-oxide-[protein] + [thioredoxin]-dithiol. The catalysed reaction is [thioredoxin]-disulfide + L-methionine + H2O = L-methionine (R)-S-oxide + [thioredoxin]-dithiol. Functionally, methionine-sulfoxide reductase that specifically reduces methionine (R)-sulfoxide back to methionine. While in many cases, methionine oxidation is the result of random oxidation following oxidative stress, methionine oxidation is also a post-translational modification that takes place on specific residue. Upon oxidative stress, may play a role in the preservation of mitochondrial integrity by decreasing the intracellular reactive oxygen species build-up through its scavenging role, hence contributing to cell survival and protein maintenance. The chain is Methionine-R-sulfoxide reductase B2, mitochondrial (msrb2) from Danio rerio (Zebrafish).